Here is a 258-residue protein sequence, read N- to C-terminus: Spindlin-3 (258 aa).

Residues 1-23 (MKTPFGKAAAGQRSRTGAGHGSV) are disordered. Tudor-like domain regions lie at residues 50-99 (VGCR…LELH), 129-178 (VGKA…YQLL), and 210-255 (VGKQ…YDLV). Histone H3K4me3 and H3R8me2a binding regions lie at residues E138 and 246–248 (DFH).

The protein belongs to the SPIN/STSY family. In terms of assembly, interacts with C11orf84/SPINDOC.

Exhibits H3K4me3-binding activity. The sequence is that of Spindlin-3 (SPIN3) from Homo sapiens (Human).